Consider the following 89-residue polypeptide: Transcription elongation factor 1 homolog (89 aa).

Cys25, Cys28, Cys49, and Cys52 together coordinate Zn(2+).

Belongs to the ELOF1 family.

The protein resides in the nucleus. Functionally, transcription elongation factor implicated in the maintenance of proper chromatin structure in actively transcribed regions. In Oryza sativa subsp. japonica (Rice), this protein is Transcription elongation factor 1 homolog.